We begin with the raw amino-acid sequence, 66 residues long: Large ribosomal subunit protein bL33c (66 aa).

This sequence belongs to the bacterial ribosomal protein bL33 family.

The protein localises to the plastid. The protein resides in the chloroplast. In Fagopyrum esculentum subsp. ancestrale (Wild buckwheat), this protein is Large ribosomal subunit protein bL33c.